The following is a 1101-amino-acid chain: Endoglucanase C (1101 aa).

The first 32 residues, 1–32 (MVSRRSSQARGALTAVVATLALALAGSGTALA), serve as a signal peptide directing secretion. 2 CBM-cenC domains span residues 64 to 173 (LCVA…TFCL) and 212 to 318 (MCVD…EFCI). The interval 329-880 (PPPGYEPDTG…PDGCAPSACY (552 aa)) is catalytic. The active-site Nucleophile is the aspartate 506. Histidine 831 is a catalytic residue. The segment at 838–865 (QLDPSLPSPPPGSLAGGPNSQAATWDPT) is disordered. Catalysis depends on residues aspartate 882 and glutamate 891. 2 Ig-like domains span residues 918 to 1006 (TAPV…LTVE) and 1008 to 1097 (AAPV…LAVQ).

This sequence belongs to the glycosyl hydrolase 9 (cellulase E) family.

It catalyses the reaction Endohydrolysis of (1-&gt;4)-beta-D-glucosidic linkages in cellulose, lichenin and cereal beta-D-glucans.. In terms of biological role, the biological conversion of cellulose to glucose generally requires three types of hydrolytic enzymes: (1) Endoglucanases which cut internal beta-1,4-glucosidic bonds; (2) Exocellobiohydrolases that cut the disaccharide cellobiose from the non-reducing end of the cellulose polymer chain; (3) Beta-1,4-glucosidases which hydrolyze the cellobiose and other short cello-oligosaccharides to glucose. The polypeptide is Endoglucanase C (cenC) (Cellulomonas fimi (strain ATCC 484 / DSM 20113 / JCM 1341 / CCUG 24087 / LMG 16345 / NBRC 15513 / NCIMB 8980 / NCTC 7547 / NRS-133)).